Consider the following 335-residue polypeptide: Methionyl-tRNA formyltransferase (335 aa).

122 to 125 (SLLP) is a (6S)-5,6,7,8-tetrahydrofolate binding site. A disordered region spans residues 203 to 222 (DSHGPLGEPQDPAKVSKAPR).

This sequence belongs to the Fmt family.

The catalysed reaction is L-methionyl-tRNA(fMet) + (6R)-10-formyltetrahydrofolate = N-formyl-L-methionyl-tRNA(fMet) + (6S)-5,6,7,8-tetrahydrofolate + H(+). Its function is as follows. Attaches a formyl group to the free amino group of methionyl-tRNA(fMet). The formyl group appears to play a dual role in the initiator identity of N-formylmethionyl-tRNA by promoting its recognition by IF2 and preventing the misappropriation of this tRNA by the elongation apparatus. This is Methionyl-tRNA formyltransferase from Rhodopirellula baltica (strain DSM 10527 / NCIMB 13988 / SH1).